The sequence spans 284 residues: Pantothenate synthetase (284 aa).

Met-30 to His-37 serves as a coordination point for ATP. His-37 serves as the catalytic Proton donor. Gln-61 provides a ligand contact to (R)-pantoate. Gln-61 lines the beta-alanine pocket. An ATP-binding site is contributed by Gly-147–Asp-150. Gln-153 provides a ligand contact to (R)-pantoate. ATP-binding positions include Val-176 and Lys-184 to Arg-187.

It belongs to the pantothenate synthetase family. As to quaternary structure, homodimer.

The protein localises to the cytoplasm. The catalysed reaction is (R)-pantoate + beta-alanine + ATP = (R)-pantothenate + AMP + diphosphate + H(+). It functions in the pathway cofactor biosynthesis; (R)-pantothenate biosynthesis; (R)-pantothenate from (R)-pantoate and beta-alanine: step 1/1. Its function is as follows. Catalyzes the condensation of pantoate with beta-alanine in an ATP-dependent reaction via a pantoyl-adenylate intermediate. The sequence is that of Pantothenate synthetase from Lysinibacillus sphaericus (strain C3-41).